We begin with the raw amino-acid sequence, 306 residues long: Ribonuclease Z (306 aa).

Positions 63, 65, 67, 68, 140, 211, and 269 each coordinate Zn(2+). Residue aspartate 67 is the Proton acceptor of the active site.

It belongs to the RNase Z family. In terms of assembly, homodimer. Zn(2+) serves as cofactor.

The enzyme catalyses Endonucleolytic cleavage of RNA, removing extra 3' nucleotides from tRNA precursor, generating 3' termini of tRNAs. A 3'-hydroxy group is left at the tRNA terminus and a 5'-phosphoryl group is left at the trailer molecule.. Functionally, zinc phosphodiesterase, which displays some tRNA 3'-processing endonuclease activity. Probably involved in tRNA maturation, by removing a 3'-trailer from precursor tRNA. The sequence is that of Ribonuclease Z from Listeria monocytogenes serovar 1/2a (strain ATCC BAA-679 / EGD-e).